A 64-amino-acid chain; its full sequence is Long neurotoxin MS2 (64 aa).

5 cysteine pairs are disulfide-bonded: C3–C24, C6–C11, C17–C41, C45–C57, and C58–C63.

The protein belongs to the three-finger toxin family. Ancestral subfamily. Expressed by the venom gland.

It localises to the secreted. Produces peripheral paralysis by blocking neuromuscular transmission at the postsynaptic site. Very weak inhibitor of the endogenous nicotinic acetylcholine receptors (nAChR) in the human rhabdomyosarcoma TE 671 cell line. Not toxic to mice by intraperitoneal injection or to zebrafish by injection at the back of the dorsolateral region. In Micrurus surinamensis (Surinam coral snake), this protein is Long neurotoxin MS2.